The following is a 192-amino-acid chain: TDGHQAAAPQVGDPQAGEAKANGVCLACHGPQGNSLVPIWPKLAGQHPEYIVKQLMDFKQRRANEQMTPMAMPLTDQEVLDLAAYYATQPKTPGAADPELASKGESLYRWGNPETGVPACSGCHGPAGGAGQSLAKFPRLSAQHADYTKQTLEHFRGALRANDPNGMMRGAAARLSDQEIAAVSQYLQGLSQ.

Cytochrome c domains lie at 12-90 (GDPQ…ATQP) and 99-191 (ELAS…QGLS). Residues C25, C28, H29, C120, C123, and H124 each contribute to the heme c site.

Post-translationally, binds 2 heme c groups covalently per subunit.

The protein localises to the periplasm. Functionally, diheme, high potential cytochrome c believed to be an intermediate electron donor in an anaerobic electron transport chain. The sequence is that of Cytochrome c4 from Thiocapsa roseopersicina.